Reading from the N-terminus, the 191-residue chain is Casparian strip membrane protein 4 (191 aa).

Residues 1 to 27 (MKTGSVEAGEQASEDATPRRGKKLNRG) are Cytoplasmic-facing. The helical transmembrane segment at 28–48 (ILILDLVLRVFGAICTLGSAV) threads the bilayer. Over 49-72 (AMGTTSQTLPSSSQFFRFRAKYND) the chain is Extracellular. Residues 73–93 (LPMFMFFAIANSIVCAYLVLS) form a helical membrane-spanning segment. Residues 94–110 (LRLSIFHIIRSAGIITR) are Cytoplasmic-facing. Residues 111–131 (IILVTFDMVMLVLLTCGASAA) form a helical membrane-spanning segment. Over 132–160 (TSIVYLAHKGNASANWLPFCVRFSHFCNR) the chain is Extracellular. A glycan (N-linked (GlcNAc...) asparagine) is linked at Asn142. The chain crosses the membrane as a helical span at residues 161 to 181 (ISGSLIGSFFSIIIFMLLVIL). At 182–191 (SAVSQFSICN) the chain is on the cytoplasmic side.

This sequence belongs to the Casparian strip membrane proteins (CASP) family. Homodimer and heterodimers.

The protein localises to the cell membrane. Its function is as follows. Regulates membrane-cell wall junctions and localized cell wall deposition. Required for establishment of the Casparian strip membrane domain (CSD) and the subsequent formation of Casparian strips, a cell wall modification of the root endodermis that determines an apoplastic barrier between the intraorganismal apoplasm and the extraorganismal apoplasm and prevents lateral diffusion. This chain is Casparian strip membrane protein 4, found in Ricinus communis (Castor bean).